The sequence spans 119 residues: NADH-quinone oxidoreductase subunit A (119 aa).

The next 3 helical transmembrane spans lie at 7–27, 63–83, and 88–108; these read YPVL…VSIG, LVAI…PWGV, and IGWP…LGFA.

The protein belongs to the complex I subunit 3 family. In terms of assembly, NDH-1 is composed of 14 different subunits. Subunits NuoA, H, J, K, L, M, N constitute the membrane sector of the complex.

Its subcellular location is the cell inner membrane. It carries out the reaction a quinone + NADH + 5 H(+)(in) = a quinol + NAD(+) + 4 H(+)(out). NDH-1 shuttles electrons from NADH, via FMN and iron-sulfur (Fe-S) centers, to quinones in the respiratory chain. The immediate electron acceptor for the enzyme in this species is believed to be ubiquinone. Couples the redox reaction to proton translocation (for every two electrons transferred, four hydrogen ions are translocated across the cytoplasmic membrane), and thus conserves the redox energy in a proton gradient. The chain is NADH-quinone oxidoreductase subunit A from Burkholderia mallei (strain NCTC 10247).